A 239-amino-acid polypeptide reads, in one-letter code: MKLYEYLVEGTKHFTLIDPDKSVDYLKIAKYALEAGTDGILVGGSLGIRESQITQVVKDIKSIAHVPVVIFPGSISQLTDEADGVLFLSVLNSLDPYYIIGAQIQGAVLLAKHYPKLEVISTAYIIIGDGGAAGFVSMSKPIPYTRPDIVMAYALAANYIGFKAVYLEAGSGAPQPAPPEMVRAARRVFPRILIVGGGIRSGEVAYTIAREKPNVIVTGTLAEEKPEKLGEIIRAIKSA.

Residues D18 and S45 each contribute to the Mg(2+) site. Sn-glycerol 1-phosphate-binding positions include 166 to 172 (YLEAGSG), 197 to 198 (GG), and 219 to 220 (GT).

It belongs to the GGGP/HepGP synthase family. Group II subfamily. Mg(2+) is required as a cofactor.

The protein resides in the cytoplasm. The enzyme catalyses sn-glycerol 1-phosphate + (2E,6E,10E)-geranylgeranyl diphosphate = sn-3-O-(geranylgeranyl)glycerol 1-phosphate + diphosphate. The protein operates within membrane lipid metabolism; glycerophospholipid metabolism. Its function is as follows. Prenyltransferase that catalyzes the transfer of the geranylgeranyl moiety of geranylgeranyl diphosphate (GGPP) to the C3 hydroxyl of sn-glycerol-1-phosphate (G1P). This reaction is the first ether-bond-formation step in the biosynthesis of archaeal membrane lipids. The polypeptide is Geranylgeranylglyceryl phosphate synthase (Pyrobaculum islandicum (strain DSM 4184 / JCM 9189 / GEO3)).